The sequence spans 192 residues: MKNTDAMVIDTLKEVGALLEGHFLLSSGRHSNRYCQCAQLLKYPEKAEKVLKVVADQLKDIDFDLVVGPAMGGVIVAYELGRQLGKPAIFTERENGEMTLRRGFTIEKGQKVVITEDVVTTGKSFKEAAKVIEEQGGEVVAVVCIVDRTPGNVTDFPMYSSIKLDIESFEAENCPLCKEGVPYIKPGSRNIK.

116 to 124 (EDVVTTGKS) contributes to the 5-phospho-alpha-D-ribose 1-diphosphate binding site. Residues T120 and R148 each coordinate orotate.

It belongs to the purine/pyrimidine phosphoribosyltransferase family. PyrE subfamily. As to quaternary structure, homodimer. Mg(2+) is required as a cofactor.

The enzyme catalyses orotidine 5'-phosphate + diphosphate = orotate + 5-phospho-alpha-D-ribose 1-diphosphate. The protein operates within pyrimidine metabolism; UMP biosynthesis via de novo pathway; UMP from orotate: step 1/2. Its function is as follows. Catalyzes the transfer of a ribosyl phosphate group from 5-phosphoribose 1-diphosphate to orotate, leading to the formation of orotidine monophosphate (OMP). The protein is Orotate phosphoribosyltransferase of Clostridium perfringens (strain ATCC 13124 / DSM 756 / JCM 1290 / NCIMB 6125 / NCTC 8237 / Type A).